A 390-amino-acid chain; its full sequence is Glutamyl-tRNA reductase (390 aa).

Residues 46 to 49, serine 96, 101 to 103, and glutamine 107 each bind substrate; these read TCNR and EAQ. Residue cysteine 47 is the Nucleophile of the active site. 176–181 provides a ligand contact to NADP(+); that stretch reads GAGEMA.

This sequence belongs to the glutamyl-tRNA reductase family. Homodimer.

It carries out the reaction (S)-4-amino-5-oxopentanoate + tRNA(Glu) + NADP(+) = L-glutamyl-tRNA(Glu) + NADPH + H(+). It participates in porphyrin-containing compound metabolism; protoporphyrin-IX biosynthesis; 5-aminolevulinate from L-glutamyl-tRNA(Glu): step 1/2. Catalyzes the NADPH-dependent reduction of glutamyl-tRNA(Glu) to glutamate 1-semialdehyde (GSA). In Thermus thermophilus (strain ATCC BAA-163 / DSM 7039 / HB27), this protein is Glutamyl-tRNA reductase.